A 173-amino-acid polypeptide reads, in one-letter code: Large ribosomal subunit protein uL10 (173 aa).

Belongs to the universal ribosomal protein uL10 family. In terms of assembly, part of the ribosomal stalk of the 50S ribosomal subunit. The N-terminus interacts with L11 and the large rRNA to form the base of the stalk. The C-terminus forms an elongated spine to which L12 dimers bind in a sequential fashion forming a multimeric L10(L12)X complex.

In terms of biological role, forms part of the ribosomal stalk, playing a central role in the interaction of the ribosome with GTP-bound translation factors. The polypeptide is Large ribosomal subunit protein uL10 (Cupriavidus metallidurans (strain ATCC 43123 / DSM 2839 / NBRC 102507 / CH34) (Ralstonia metallidurans)).